Reading from the N-terminus, the 292-residue chain is Lyso-ornithine lipid O-acyltransferase (292 aa).

A helical membrane pass occupies residues Gly11–Leu31. Residues Arg258–Pro292 form a disordered region.

It belongs to the 1-acyl-sn-glycerol-3-phosphate acyltransferase family. OlsA subfamily.

The protein resides in the membrane. The enzyme catalyses a lyso-ornithine lipid + a fatty acyl-[ACP] = an N(2)-[(3R)-3-(acyloxy)acyl]-L-ornithine lipid + holo-[ACP]. It participates in lipid metabolism. Catalyzes the second step in the formation of ornithine lipids, which are phosphorus-free membrane lipids. Uses acyl-acyl carrier protein (acyl-AcpP) as an acyl donor and converts lyso-ornithine lipid (LOL) into ornithine lipid (OL). The protein is Lyso-ornithine lipid O-acyltransferase of Rhizobium meliloti (strain 1021) (Ensifer meliloti).